Reading from the N-terminus, the 102-residue chain is Small ribosomal subunit protein uS10 (102 aa).

It belongs to the universal ribosomal protein uS10 family. In terms of assembly, part of the 30S ribosomal subunit.

Functionally, involved in the binding of tRNA to the ribosomes. This is Small ribosomal subunit protein uS10 from Clostridium acetobutylicum (strain ATCC 824 / DSM 792 / JCM 1419 / IAM 19013 / LMG 5710 / NBRC 13948 / NRRL B-527 / VKM B-1787 / 2291 / W).